Consider the following 65-residue polypeptide: Large ribosomal subunit protein uL29 (65 aa).

This sequence belongs to the universal ribosomal protein uL29 family.

The protein is Large ribosomal subunit protein uL29 of Dehalococcoides mccartyi (strain ATCC BAA-2266 / KCTC 15142 / 195) (Dehalococcoides ethenogenes (strain 195)).